A 281-amino-acid chain; its full sequence is Lectin CaBo (281 aa).

Positions 1–29 (MAISKKSSLYLPIFTFITMLLMVVNKVSS) are cleaved as a signal peptide. D119 is a binding site for Ca(2+). A carbohydrate is bound at residue R139. Positions 149 to 163 (IIKNSTTIDFNAAYN) are cleaved as a propeptide — removed in mature form. Mn(2+) contacts are provided by E171 and D173. Residues D173, Y175, N177, and D182 each contribute to the Ca(2+) site. Y175 lines the a carbohydrate pocket. Mn(2+) is bound by residues D182 and H187. 262–263 (LY) contributes to the a carbohydrate binding site.

The protein belongs to the leguminous lectin family. In terms of assembly, equilibrium between homodimer and homotetramer. Post-translationally, the mature chain consists of residues 164-281 followed by residues 30-148. Concanavalin A-like lectins of the Diocleinae subtribe undergo proteolytic processing referred to as circular permutation. The propeptide is split into an N-terminal and a C-terminal part, the gamma and beta chain, respectively. These are then religated in beta-gamma order to form the mature alpha chain. The beta and gamma chains can often be detected in cell extracts.

Functionally, D-mannose-specific lectin. This is Lectin CaBo from Canavalia bonariensis.